The primary structure comprises 209 residues: Small ribosomal subunit protein uS3 (209 aa).

One can recognise a KH type-2 domain in the interval I38–K107.

It belongs to the universal ribosomal protein uS3 family. As to quaternary structure, part of the 30S ribosomal subunit. Forms a tight complex with proteins S10 and S14.

Its function is as follows. Binds the lower part of the 30S subunit head. Binds mRNA in the 70S ribosome, positioning it for translation. This Pseudothermotoga lettingae (strain ATCC BAA-301 / DSM 14385 / NBRC 107922 / TMO) (Thermotoga lettingae) protein is Small ribosomal subunit protein uS3.